A 193-amino-acid polypeptide reads, in one-letter code: Protein GrpE (193 aa).

Residues 1-26 (MTKKHHKEQEEIQETIKTEAAEENVG) form a disordered region. The span at 7–20 (KEQEEIQETIKTEA) shows a compositional bias: basic and acidic residues.

It belongs to the GrpE family. In terms of assembly, homodimer.

Its subcellular location is the cytoplasm. Functionally, participates actively in the response to hyperosmotic and heat shock by preventing the aggregation of stress-denatured proteins, in association with DnaK and GrpE. It is the nucleotide exchange factor for DnaK and may function as a thermosensor. Unfolded proteins bind initially to DnaJ; upon interaction with the DnaJ-bound protein, DnaK hydrolyzes its bound ATP, resulting in the formation of a stable complex. GrpE releases ADP from DnaK; ATP binding to DnaK triggers the release of the substrate protein, thus completing the reaction cycle. Several rounds of ATP-dependent interactions between DnaJ, DnaK and GrpE are required for fully efficient folding. This chain is Protein GrpE, found in Chlorobaculum parvum (strain DSM 263 / NCIMB 8327) (Chlorobium vibrioforme subsp. thiosulfatophilum).